A 379-amino-acid polypeptide reads, in one-letter code: Glucose-1-phosphate adenylyltransferase (379 aa).

Residues Y99, G164, 179–180 (EK), and S190 each bind alpha-D-glucose 1-phosphate.

The protein belongs to the bacterial/plant glucose-1-phosphate adenylyltransferase family. In terms of assembly, homotetramer.

The catalysed reaction is alpha-D-glucose 1-phosphate + ATP + H(+) = ADP-alpha-D-glucose + diphosphate. Its pathway is glycan biosynthesis; glycogen biosynthesis. In terms of biological role, involved in the biosynthesis of ADP-glucose, a building block required for the elongation reactions to produce glycogen. Catalyzes the reaction between ATP and alpha-D-glucose 1-phosphate (G1P) to produce pyrophosphate and ADP-Glc. This Bacillus licheniformis (strain ATCC 14580 / DSM 13 / JCM 2505 / CCUG 7422 / NBRC 12200 / NCIMB 9375 / NCTC 10341 / NRRL NRS-1264 / Gibson 46) protein is Glucose-1-phosphate adenylyltransferase.